A 544-amino-acid chain; its full sequence is NXPE family member 4 (544 aa).

An N-terminal signal peptide occupies residues 1–27 (MKISMINYKSLLALLFILASWIIFTVF). N29, N38, N47, N48, N92, N160, and N210 each carry an N-linked (GlcNAc...) asparagine glycan.

It belongs to the NXPE family.

The protein localises to the secreted. This chain is NXPE family member 4 (NXPE4), found in Homo sapiens (Human).